A 570-amino-acid chain; its full sequence is Periplasmic trehalase (570 aa).

An N-terminal signal peptide occupies residues 1–34 (MIPPEIRRSVLLQKAIKLALAGTLLTFASFSATA). Substrate contacts are provided by residues Arg159, 166 to 167 (WD), Asn203, 212 to 214 (RSQ), 284 to 286 (RPE), and Gly317. Residues Asp319 and Glu503 each act as proton donor/acceptor in the active site. Residue Glu518 coordinates substrate. The interval 544–570 (KPCDSVPSTRPASLSATPTKTPSAATQ) is disordered. Residues 554 to 570 (PASLSATPTKTPSAATQ) show a composition bias toward low complexity.

The protein belongs to the glycosyl hydrolase 37 family. In terms of assembly, monomer.

It localises to the periplasm. The enzyme catalyses alpha,alpha-trehalose + H2O = alpha-D-glucose + beta-D-glucose. Provides the cells with the ability to utilize trehalose at high osmolarity by splitting it into glucose molecules that can subsequently be taken up by the phosphotransferase-mediated uptake system. This is Periplasmic trehalase from Salmonella paratyphi A (strain AKU_12601).